Here is a 208-residue protein sequence, read N- to C-terminus: MGISRDNWHKRRKTGGKRKPYHKKRKYELGRPAANTKIGPRRIHTVRVRGGNKKYRALRLDVGNFSWGSECCTRKTRIIDVVYNASNNELVRTKTLVKNCIVLIDSTPYRQWYESHYALPLGRKKGAKLTPEEEEILNKKRSKKIQKKYDERKKNAKISSLLEEQFQQGKLLACIASRPGQCGRADGYVLEGKELEFYLRKIKARKGK.

Residues 1-27 (MGISRDNWHKRRKTGGKRKPYHKKRKY) form a disordered region. Residue G2 is the site of N-myristoyl glycine attachment. The span at 8–26 (WHKRRKTGGKRKPYHKKRK) shows a compositional bias: basic residues. 2 positions are modified to N6-acetyllysine: K37 and K128. A Phosphothreonine modification is found at T130. Phosphoserine is present on S160. Glycyl lysine isopeptide (Lys-Gly) (interchain with G-Cter in SUMO2) cross-links involve residues K170 and K193.

This sequence belongs to the eukaryotic ribosomal protein eS8 family. As to quaternary structure, component of the small ribosomal subunit. Identified in a IGF2BP1-dependent mRNP granule complex containing untranslated mRNAs. Part of the small subunit (SSU) processome, composed of more than 70 proteins and the RNA chaperone small nucleolar RNA (snoRNA) U3.

It is found in the cytoplasm. The protein localises to the membrane. Its subcellular location is the nucleus. The protein resides in the nucleolus. Its function is as follows. Component of the small ribosomal subunit. The ribosome is a large ribonucleoprotein complex responsible for the synthesis of proteins in the cell. Part of the small subunit (SSU) processome, first precursor of the small eukaryotic ribosomal subunit. During the assembly of the SSU processome in the nucleolus, many ribosome biogenesis factors, an RNA chaperone and ribosomal proteins associate with the nascent pre-rRNA and work in concert to generate RNA folding, modifications, rearrangements and cleavage as well as targeted degradation of pre-ribosomal RNA by the RNA exosome. This Mus musculus (Mouse) protein is Small ribosomal subunit protein eS8 (Rps8).